We begin with the raw amino-acid sequence, 62 residues long: Alpha-lytic protease L1 (62 aa).

Ser48 (charge relay system) is an active-site residue.

This sequence belongs to the peptidase S1 family. Monomer.

Its subcellular location is the secreted. The enzyme catalyses Preferential cleavage: Ala-|-Xaa, Val-|-Xaa in bacterial cell walls, elastin and other proteins.. Inhibited by phenylmethanesulfonyl fluoride (PMSF) and p-chloromercuribenzoate (PCMB). Its function is as follows. Has bacteriolytic activity. The chain is Alpha-lytic protease L1 from Lysobacter sp. (strain XL1).